Here is a 329-residue protein sequence, read N- to C-terminus: Glyceraldehyde-3-phosphate dehydrogenase 1 (329 aa).

Residues 11–12 (RI), Asp33, and Lys78 contribute to the NAD(+) site. D-glyceraldehyde 3-phosphate is bound by residues 148–150 (SCT), Thr179, 208–209 (TG), and Arg231. The active-site Nucleophile is the Cys149. Asn313 serves as a coordination point for NAD(+).

This sequence belongs to the glyceraldehyde-3-phosphate dehydrogenase family. In terms of assembly, homotetramer.

It is found in the cytoplasm. The catalysed reaction is D-glyceraldehyde 3-phosphate + phosphate + NAD(+) = (2R)-3-phospho-glyceroyl phosphate + NADH + H(+). It participates in carbohydrate degradation; glycolysis; pyruvate from D-glyceraldehyde 3-phosphate: step 1/5. This is Glyceraldehyde-3-phosphate dehydrogenase 1 (GAP1) from Kluyveromyces lactis (strain ATCC 8585 / CBS 2359 / DSM 70799 / NBRC 1267 / NRRL Y-1140 / WM37) (Yeast).